A 188-amino-acid chain; its full sequence is Ribosomal RNA small subunit methyltransferase G (188 aa).

S-adenosyl-L-methionine-binding positions include Gly69, Phe74, 119–120 (VQ), and Arg134.

Belongs to the methyltransferase superfamily. RNA methyltransferase RsmG family.

The protein resides in the cytoplasm. It catalyses the reaction guanosine(527) in 16S rRNA + S-adenosyl-L-methionine = N(7)-methylguanosine(527) in 16S rRNA + S-adenosyl-L-homocysteine. Its function is as follows. Specifically methylates the N7 position of guanine in position 527 of 16S rRNA. This is Ribosomal RNA small subunit methyltransferase G from Campylobacter jejuni subsp. jejuni serotype O:2 (strain ATCC 700819 / NCTC 11168).